Consider the following 317-residue polypeptide: Retinol dehydrogenase 16 (317 aa).

Residue 33 to 57 (FITGCDSGFGTLLARQLDRRGMRVL) participates in NAD(+) binding. Tyr-176 serves as the catalytic Proton acceptor. Residues 289–309 (LFYLPLSYLPTFLVDALLYWT) form a helical membrane-spanning segment.

Belongs to the short-chain dehydrogenases/reductases (SDR) family. In terms of assembly, homodimer. Not glycosylated.

It localises to the endoplasmic reticulum membrane. The protein resides in the microsome membrane. The catalysed reaction is all-trans-retinol--[retinol-binding protein] + NAD(+) = all-trans-retinal--[retinol-binding protein] + NADH + H(+). It catalyses the reaction 9-cis-retinol + NAD(+) = 9-cis-retinal + NADH + H(+). The enzyme catalyses 11-cis-retinol + NAD(+) = 11-cis-retinal + NADH + H(+). It carries out the reaction 13-cis-retinol + NAD(+) = 13-cis-retinal + NADH + H(+). The catalysed reaction is androsterone + NAD(+) = 5alpha-androstan-3,17-dione + NADH + H(+). It catalyses the reaction 5alpha-androstane-3alpha,17beta-diol + NAD(+) = 17beta-hydroxy-5alpha-androstan-3-one + NADH + H(+). It functions in the pathway cofactor metabolism; retinol metabolism. Functionally, oxidoreductase with a preference for NAD. Oxidizes all-trans-retinol, 9-cis-retinol, 11-cis-retinol and 13-cis-retinol to the corresponding aldehydes. Has higher activity towards CRBP-bound retinol than with free retinol. Oxidizes 3-alpha-hydroxysteroids. Oxidizes androstanediol and androsterone to dihydrotestosterone and androstanedione. Can also catalyze the reverse reaction. This Mus musculus (Mouse) protein is Retinol dehydrogenase 16.